A 103-amino-acid chain; its full sequence is Acyl carrier protein (103 aa).

In terms of domain architecture, Carrier spans 14 to 89; it reads NIVSNIVQDI…EFIDFTLQTI (76 aa). S49 carries the post-translational modification O-(pantetheine 4'-phosphoryl)serine.

Belongs to the acyl carrier protein (ACP) family. Post-translationally, 4'-phosphopantetheine is transferred from CoA to a specific serine of apo-ACP by AcpS. This modification is essential for activity because fatty acids are bound in thioester linkage to the sulfhydryl of the prosthetic group.

It is found in the plastid. It localises to the cyanelle. It participates in lipid metabolism; fatty acid biosynthesis. In terms of biological role, carrier of the growing fatty acid chain in fatty acid biosynthesis. This Cyanophora paradoxa protein is Acyl carrier protein.